We begin with the raw amino-acid sequence, 475 residues long: Bifunctional protein HldE (475 aa).

The ribokinase stretch occupies residues 1–318; that stretch reads MKVTLPDFER…ENAVRGRAET (318 aa). Residue 195 to 198 coordinates ATP; it reads NLSE. Residue Asp-264 is part of the active site. The interval 344–475 is cytidylyltransferase; the sequence is MTNGVFDILH…NIIKKIQKNS (132 aa).

It in the N-terminal section; belongs to the carbohydrate kinase PfkB family. In the C-terminal section; belongs to the cytidylyltransferase family. Homodimer.

It catalyses the reaction D-glycero-beta-D-manno-heptose 7-phosphate + ATP = D-glycero-beta-D-manno-heptose 1,7-bisphosphate + ADP + H(+). The catalysed reaction is D-glycero-beta-D-manno-heptose 1-phosphate + ATP + H(+) = ADP-D-glycero-beta-D-manno-heptose + diphosphate. It participates in nucleotide-sugar biosynthesis; ADP-L-glycero-beta-D-manno-heptose biosynthesis; ADP-L-glycero-beta-D-manno-heptose from D-glycero-beta-D-manno-heptose 7-phosphate: step 1/4. Its pathway is nucleotide-sugar biosynthesis; ADP-L-glycero-beta-D-manno-heptose biosynthesis; ADP-L-glycero-beta-D-manno-heptose from D-glycero-beta-D-manno-heptose 7-phosphate: step 3/4. In terms of biological role, catalyzes the phosphorylation of D-glycero-D-manno-heptose 7-phosphate at the C-1 position to selectively form D-glycero-beta-D-manno-heptose-1,7-bisphosphate. Catalyzes the ADP transfer from ATP to D-glycero-beta-D-manno-heptose 1-phosphate, yielding ADP-D-glycero-beta-D-manno-heptose. This chain is Bifunctional protein HldE, found in Cronobacter sakazakii (strain ATCC BAA-894) (Enterobacter sakazakii).